The chain runs to 262 residues: Type III pantothenate kinase (262 aa).

Position 6-13 (6-13 (DVGNTNAV)) interacts with ATP. Residues Tyr100 and 107–110 (GADR) each bind substrate. Catalysis depends on Asp109, which acts as the Proton acceptor. Position 129 (Asp129) interacts with K(+). Residue Thr132 participates in ATP binding. Residue Thr184 coordinates substrate.

This sequence belongs to the type III pantothenate kinase family. Homodimer. NH4(+) is required as a cofactor. The cofactor is K(+).

The protein resides in the cytoplasm. The catalysed reaction is (R)-pantothenate + ATP = (R)-4'-phosphopantothenate + ADP + H(+). Its pathway is cofactor biosynthesis; coenzyme A biosynthesis; CoA from (R)-pantothenate: step 1/5. Its function is as follows. Catalyzes the phosphorylation of pantothenate (Pan), the first step in CoA biosynthesis. The chain is Type III pantothenate kinase from Bacillus cytotoxicus (strain DSM 22905 / CIP 110041 / 391-98 / NVH 391-98).